An 84-amino-acid polypeptide reads, in one-letter code: UPF0473 protein CLD_2004 (84 aa).

It belongs to the UPF0473 family.

This chain is UPF0473 protein CLD_2004, found in Clostridium botulinum (strain Okra / Type B1).